Consider the following 768-residue polypeptide: Solabiose phosphorylase (768 aa).

D456 functions as the Proton donor in the catalytic mechanism.

Belongs to the glycosyl hydrolase 94 family.

It catalyses the reaction solabiose + phosphate = D-galactose + alpha-D-glucose 1-phosphate. In terms of biological role, catalyzes the reversible phosphorolysis of solabiose. Catalyzes the phosphorolysis and synthesis of solabiose through a sequential bi-bi mechanism involving the formation of a ternary complex. Is probably involved in the metabolism of solabiose released from solabiose-containing compounds. This chain is Solabiose phosphorylase, found in Paenibacillus borealis.